Here is a 238-residue protein sequence, read N- to C-terminus: Deoxyribose-phosphate aldolase (238 aa).

D102 serves as the catalytic Proton donor/acceptor. Residue K164 is the Schiff-base intermediate with acetaldehyde of the active site. K193 serves as the catalytic Proton donor/acceptor.

This sequence belongs to the DeoC/FbaB aldolase family. DeoC type 1 subfamily.

The protein resides in the cytoplasm. The catalysed reaction is 2-deoxy-D-ribose 5-phosphate = D-glyceraldehyde 3-phosphate + acetaldehyde. Its pathway is carbohydrate degradation; 2-deoxy-D-ribose 1-phosphate degradation; D-glyceraldehyde 3-phosphate and acetaldehyde from 2-deoxy-alpha-D-ribose 1-phosphate: step 2/2. Its function is as follows. Catalyzes a reversible aldol reaction between acetaldehyde and D-glyceraldehyde 3-phosphate to generate 2-deoxy-D-ribose 5-phosphate. This chain is Deoxyribose-phosphate aldolase, found in Rhodospirillum rubrum (strain ATCC 11170 / ATH 1.1.1 / DSM 467 / LMG 4362 / NCIMB 8255 / S1).